Consider the following 880-residue polypeptide: MOG interacting and ectopic P-granules protein 1 (880 aa).

Residues 1 to 20 show a composition bias toward polar residues; it reads MVTSDETVLATTTNKTSITT. Disordered stretches follow at residues 1–37, 82–257, and 350–370; these read MVTS…SETD, DKVE…DDNE, and ERPK…QHNP. A compositionally biased stretch (basic and acidic residues) spans 23–37; it reads MEPKSSDESTDSETD. Residues 87 to 105 show a composition bias toward polar residues; the sequence is ATNSVVDLSSNGSSATTSV. Over residues 108–120 the composition is skewed to acidic residues; sequence EEQEEKANEDETN. Basic and acidic residues-rich tracts occupy residues 154 to 170 and 183 to 193; these read SKSD…IKDS and KPEEKEEKNDT. The span at 215 to 224 shows a compositional bias: acidic residues; sequence QLDDDDDDIQ. Composition is skewed to basic and acidic residues over residues 235–252 and 350–364; these read QKTE…KAEP and ERPK…ERQQ. 2 consecutive C2H2-type zinc fingers follow at residues 436 to 459 and 465 to 488; these read SRCG…ETLH and FQCT…FEAH. The CCHC-type zinc-finger motif lies at 501–523; that stretch reads YPCAICEEDFNFKGVREQHYKQC. 4 C2H2-type zinc fingers span residues 728–751, 768–791, 809–830, and 841–864; these read FQCE…QVLH, LACS…VMSH, GRCK…VADH, and YSCD…SSTH.

As to quaternary structure, interacts with hda-1, let-418, lin-1, mog-1, mog-4, mog-5, mog-6, pie-1 and unc-98.

The protein localises to the nucleus. Functionally, has a broad role in development, specifically in the genetic pathway SynMuvB that negatively regulates specification of the vulval cell fate. Required for fem-3 3'-UTR-mediated repression in the regulation of the sperm/oocyte switch. Acts by regulating the translation of fem-3 mRNA, by binding to its 3'-UTR. This is MOG interacting and ectopic P-granules protein 1 from Caenorhabditis briggsae.